A 122-amino-acid chain; its full sequence is MARIAGVNIPTAKRVVIALTYIHGIGPKFAQEIVEKVGIPAERRVHQLTDAEVLQIREAIDRDYQVEGDLRRETAMNIKRLMDLGCYRGLRHRRGLPVRGQRTHTNARTRKGPAKAIAGKKK.

The interval 99–122 is disordered; sequence RGQRTHTNARTRKGPAKAIAGKKK.

The protein belongs to the universal ribosomal protein uS13 family. Part of the 30S ribosomal subunit. Forms a loose heterodimer with protein S19. Forms two bridges to the 50S subunit in the 70S ribosome.

Located at the top of the head of the 30S subunit, it contacts several helices of the 16S rRNA. In the 70S ribosome it contacts the 23S rRNA (bridge B1a) and protein L5 of the 50S subunit (bridge B1b), connecting the 2 subunits; these bridges are implicated in subunit movement. Contacts the tRNAs in the A and P-sites. The chain is Small ribosomal subunit protein uS13 from Rhizobium etli (strain CIAT 652).